The chain runs to 140 residues: Ribonucleases P/MRP protein subunit POP7 (140 aa).

The segment at 1–21 (MALKKNTHNKSTKRVTKHPSL) is disordered. S115 carries the post-translational modification Phosphoserine.

The protein belongs to the histone-like Alba family. In terms of assembly, component of nuclear RNase P and RNase MRP complexes. RNase P consists of an RNA moiety and at least 9 protein subunits including POP1, POP3, POP4, POP5, POP6, POP7, POP8, RPP1 and RPR2. RNase MRP complex consists of an RNA moiety and at least 10 protein subunits including POP1, POP3, POP4, POP5, POP6, POP7, POP8, RMP1, RPP1 and SNM1, many of which are shared with the RNase P complex.

Its subcellular location is the nucleus. It carries out the reaction Endonucleolytic cleavage of RNA, removing 5'-extranucleotides from tRNA precursor.. Its function is as follows. Component of ribonuclease P, a protein complex that generates mature tRNA molecules by cleaving their 5'-ends. Also a component of RNase MRP, which cleaves pre-rRNA sequences. This is Ribonucleases P/MRP protein subunit POP7 (POP7) from Saccharomyces cerevisiae (strain ATCC 204508 / S288c) (Baker's yeast).